A 370-amino-acid chain; its full sequence is Uroporphyrinogen decarboxylase (370 aa).

Substrate-binding positions include 29–33 (RQAGR), D79, Y155, S210, and H342.

The protein belongs to the uroporphyrinogen decarboxylase family. Homodimer.

The protein localises to the cytoplasm. It catalyses the reaction uroporphyrinogen III + 4 H(+) = coproporphyrinogen III + 4 CO2. The protein operates within porphyrin-containing compound metabolism; protoporphyrin-IX biosynthesis; coproporphyrinogen-III from 5-aminolevulinate: step 4/4. Its function is as follows. Catalyzes the decarboxylation of four acetate groups of uroporphyrinogen-III to yield coproporphyrinogen-III. The sequence is that of Uroporphyrinogen decarboxylase from Acidovorax ebreus (strain TPSY) (Diaphorobacter sp. (strain TPSY)).